The chain runs to 186 residues: Ribosome-recycling factor (186 aa).

Belongs to the RRF family.

It is found in the cytoplasm. In terms of biological role, responsible for the release of ribosomes from messenger RNA at the termination of protein biosynthesis. May increase the efficiency of translation by recycling ribosomes from one round of translation to another. The protein is Ribosome-recycling factor of Bartonella henselae (strain ATCC 49882 / DSM 28221 / CCUG 30454 / Houston 1) (Rochalimaea henselae).